The chain runs to 552 residues: Putative transport protein HSM_0534 (552 aa).

5 helical membrane passes run 4–24 (IAIT…IGHW), 28–48 (GVGL…HFMN), 67–87 (LILF…ASLL), 95–115 (GLAT…YKVV), and 157–177 (MAYA…MWLI). RCK C-terminal domains are found at residues 190 to 275 (KQFQ…VIGE) and 277 to 360 (IDMP…IIGN). 6 consecutive transmembrane segments (helical) span residues 370–390 (MLPV…PFYI), 402–424 (AGGP…LYWF), 438–458 (IVLF…DTLV), 463–483 (LEWM…TGII), 495–515 (LCGL…ANAI), and 529–549 (VYPL…ILLW).

It belongs to the AAE transporter (TC 2.A.81) family. YidE subfamily.

The protein localises to the cell membrane. The chain is Putative transport protein HSM_0534 from Histophilus somni (strain 2336) (Haemophilus somnus).